A 366-amino-acid chain; its full sequence is Terpene synthase 4 (366 aa).

Positions 91 to 96 (DDFLER) match the DDxx(x)D/E motif motif. The short motif at 241–249 (NDCVSYAKE) is the NDxxSxxxD/E motif element.

Belongs to the terpene synthase family.

The catalysed reaction is (2E,6E)-farnesyl diphosphate = (1S,2S,4R)-beta-elemene + diphosphate. Terpene synthase that converts its substrate farnesyl diphosphate (FPP) into the sesquiterpenes bicycloelemene, beta-elemene and 2 yet unidentified sesquiterpenes. The chain is Terpene synthase 4 from Dictyostelium purpureum (Slime mold).